The following is a 163-amino-acid chain: Single-stranded DNA-binding protein 2 (163 aa).

The 104-residue stretch at M1–E104 folds into the SSB domain. The tract at residues R109 to F163 is disordered. Residues G119–S130 show a composition bias toward low complexity. Positions Y131–N140 are enriched in polar residues. Residues D158–F163 carry the Important for interaction with partner proteins motif.

In terms of assembly, homotetramer.

In terms of biological role, plays an important role in DNA replication, recombination and repair. Binds to ssDNA and to an array of partner proteins to recruit them to their sites of action during DNA metabolism. In Streptococcus pyogenes serotype M6 (strain ATCC BAA-946 / MGAS10394), this protein is Single-stranded DNA-binding protein 2 (ssb2).